A 78-amino-acid chain; its full sequence is MALIKKTFFFLFAMFFILVQLSSGCQAGLDFSQPFPSGEFAVCESCKLGRGKCRKECLENEKPDGNCRLNFLCCRQRI.

An N-terminal signal peptide occupies residues 1–27 (MALIKKTFFFLFAMFFILVQLSSGCQA). Cystine bridges form between C43-C74, C53-C67, and C57-C73.

Belongs to the beta-defensin family.

It is found in the secreted. Has antimicrobial activity. In Pan troglodytes (Chimpanzee), this protein is Beta-defensin 105A (DEFB105A).